Reading from the N-terminus, the 220-residue chain is 7-cyano-7-deazaguanine synthase (220 aa).

10–20 (FSGGQDSTTCL) is an ATP binding site. 4 residues coordinate Zn(2+): cysteine 188, cysteine 197, cysteine 200, and cysteine 203.

It belongs to the QueC family. It depends on Zn(2+) as a cofactor.

It catalyses the reaction 7-carboxy-7-deazaguanine + NH4(+) + ATP = 7-cyano-7-deazaguanine + ADP + phosphate + H2O + H(+). Its pathway is purine metabolism; 7-cyano-7-deazaguanine biosynthesis. Functionally, catalyzes the ATP-dependent conversion of 7-carboxy-7-deazaguanine (CDG) to 7-cyano-7-deazaguanine (preQ(0)). In Neisseria meningitidis serogroup C (strain 053442), this protein is 7-cyano-7-deazaguanine synthase.